The chain runs to 470 residues: GTPase grn1 (470 aa).

Residues Met1–Arg16 are compositionally biased toward basic residues. Positions Met1–Tyr56 are disordered. Basic and acidic residues predominate over residues Ser17 to Lys27. A CP-type G domain is found at Asp153 to Pro333. GTP-binding positions include Asn202–Asp205, Gly276–Ser283, and Asp326–Gly329. Positions Ala405–Gly415 are RNA-binding.

It belongs to the TRAFAC class YlqF/YawG GTPase family.

It localises to the nucleus. The protein localises to the nucleolus. Required for optimal growth. Required for normal processing of ribosomal pre-rRNA. Required for nuclear export of ribosomal protein rpl2501. The protein is GTPase grn1 of Schizosaccharomyces pombe (strain 972 / ATCC 24843) (Fission yeast).